A 508-amino-acid polypeptide reads, in one-letter code: Glycerol kinase (508 aa).

ADP is bound at residue Thr14. The ATP site is built by Thr14, Thr15, and Ser16. Sn-glycerol 3-phosphate is bound at residue Thr14. Arg18 is a binding site for ADP. Sn-glycerol 3-phosphate contacts are provided by Arg84, Glu85, and Tyr136. Residues Arg84, Glu85, and Tyr136 each coordinate glycerol. His232 is modified (phosphohistidine; by HPr). Asp246 lines the sn-glycerol 3-phosphate pocket. Residues Asp246 and Gln247 each contribute to the glycerol site. Residues Thr268 and Gly311 each contribute to the ADP site. ATP-binding residues include Thr268, Gly311, Gln315, and Gly412. 2 residues coordinate ADP: Gly412 and Asn416.

The protein belongs to the FGGY kinase family. As to quaternary structure, homotetramer and homodimer (in equilibrium). The phosphoenolpyruvate-dependent sugar phosphotransferase system (PTS), including enzyme I, and histidine-containing protein (HPr) are required for the phosphorylation, which leads to the activation of the enzyme.

It carries out the reaction glycerol + ATP = sn-glycerol 3-phosphate + ADP + H(+). The protein operates within polyol metabolism; glycerol degradation via glycerol kinase pathway; sn-glycerol 3-phosphate from glycerol: step 1/1. Activated by phosphorylation and inhibited by fructose 1,6-bisphosphate (FBP). Functionally, key enzyme in the regulation of glycerol uptake and metabolism. Catalyzes the phosphorylation of glycerol to yield sn-glycerol 3-phosphate. In Streptococcus pyogenes serotype M18 (strain MGAS8232), this protein is Glycerol kinase.